The primary structure comprises 744 residues: Tripartite motif-containing protein 3 (744 aa).

A2 carries the post-translational modification N-acetylalanine. The segment at 2–290 (AKREDSPGPE…LAAQAFPERP (289 aa)) is interaction with KIF21B. Position 7 is a phosphoserine (S7). Residues 22–63 (CSICLDRYRCPKVLPCLHTFCERCLQNYIPPQSLTLSCPVCR) form an RING-type zinc finger. The B box-type zinc finger occupies 110-151 (GRPLSCPNHEGKTMEFYCEACETAMCGECRAGEHREHGTVLL). The Zn(2+) site is built by C115, H118, C138, and H143. A coiled-coil region spans residues 153-224 (DVVEQHKAAL…RKQALVSDLE (72 aa)). Residues 317-418 (TTSAAAHETV…VRGSPFRVRA (102 aa)) form a Filamin repeat. Positions 420–462 (RPGDLPPSPDDVKRRVKSPGGPGSHVRQKAVRRPSSMYSTGGK) are disordered. S427 bears the Phosphoserine mark. NHL repeat units follow at residues 473 to 516 (VFRV…FSNE), 520 to 563 (KFRF…FSPE), 564 to 605 (GKFK…FQPN), 609 to 652 (VGRF…YSAD), 656 to 699 (LFKF…FDSS), and 700 to 743 (GSFL…YRYL).

This sequence belongs to the TRIM/RBCC family. In terms of assembly, forms homooligomers. Interacts with TRIM2; this interaction reduces TRIM2 activity. Associates with myosin-Vb (MYO5B) and alpha-actinin-4 (ACTN4). Component of the CART complex, at least composed of ACTN4, HGS/HRS, MYO5B and TRIM3. Interacts with ZFYVE28/LST2. Interacts with KIF21B. Highly expressed in the brain, moderate levels in the lung, very low levels in the liver, kidney and heart. In the brain, expression was highest in the cerebellum. Expression in the brain is found at low levels at embryonic day 15 and then increases during the first two postnatal weeks before decreasing through adulthood.

The protein resides in the cytoplasm. Its subcellular location is the early endosome. The protein localises to the golgi apparatus. It localises to the trans-Golgi network. It is found in the cell projection. The protein resides in the dendrite. The enzyme catalyses S-ubiquitinyl-[E2 ubiquitin-conjugating enzyme]-L-cysteine + [acceptor protein]-L-lysine = [E2 ubiquitin-conjugating enzyme]-L-cysteine + N(6)-ubiquitinyl-[acceptor protein]-L-lysine.. E3 ubiquitin ligase that plays essential roles in neuronal functions such as regulation of neuronal plasticity, learning, and memory. In addition to its neuronal functions, participates in other biological processes such as innate immunity or cell cycle regulation. Component of the cytoskeleton-associated recycling or transport complex in neurons, polyubiquitinates gamma-actin, thus regulating neuronal plasticity, learning, and memory. Ubiquitinates postsynaptic scaffold GKAP, a neuronal substrate involved in synaptic remodeling and thereby modulates dendritic spine morphology. Positively regulates motility of microtubule-dependent motor protein KIF21B. Induces growth arrest via its RING-dependent E3 ligase activity and ubiquinates CDKN1A. Positively regulates TLR3-mediated signaling by mediating 'Lys-63'-linked polyubiquitination of TLR3. In turn, promotes the recognition and sorting of polyubiquitinated TLR3 by the ESCRT complexes. This Rattus norvegicus (Rat) protein is Tripartite motif-containing protein 3 (Trim3).